A 527-amino-acid polypeptide reads, in one-letter code: Outer capsid protein VP5 (527 aa).

An involved in membrane permeabilization region spans residues Met-1–Asp-42.

It belongs to the orbivirus VP5 family.

It is found in the virion. VP5 protein is one of the two proteins (with VP2) which constitute the virus particle outer capsid. Acts as a membrane permeabilization protein that mediates release of viral particles from endosomal compartments into the cytoplasm. Permeabilization activity is probably negatively regulated by VP2 and is triggered by endosomal degradation of VP2 and exposure to low pH. In Antilocapra americana (Pronghorn), this protein is Outer capsid protein VP5 (Segment-6).